The primary structure comprises 143 residues: Transcriptional regulator MraZ (143 aa).

2 consecutive SpoVT-AbrB domains span residues 5-47 and 76-119; these read THSP…SQKE and ASDE…DADA.

The protein belongs to the MraZ family. In terms of assembly, forms oligomers.

It is found in the cytoplasm. It localises to the nucleoid. The protein is Transcriptional regulator MraZ of Paenarthrobacter aurescens (strain TC1).